Reading from the N-terminus, the 334-residue chain is N-acetyl-gamma-glutamyl-phosphate reductase (334 aa).

Residue C154 is part of the active site.

Belongs to the NAGSA dehydrogenase family. Type 1 subfamily.

The protein localises to the cytoplasm. The enzyme catalyses N-acetyl-L-glutamate 5-semialdehyde + phosphate + NADP(+) = N-acetyl-L-glutamyl 5-phosphate + NADPH + H(+). Its pathway is amino-acid biosynthesis; L-arginine biosynthesis; N(2)-acetyl-L-ornithine from L-glutamate: step 3/4. Its function is as follows. Catalyzes the NADPH-dependent reduction of N-acetyl-5-glutamyl phosphate to yield N-acetyl-L-glutamate 5-semialdehyde. This Salmonella typhimurium (strain LT2 / SGSC1412 / ATCC 700720) protein is N-acetyl-gamma-glutamyl-phosphate reductase.